We begin with the raw amino-acid sequence, 207 residues long: LexA repressor (207 aa).

The segment at residues 28–48 is a DNA-binding region (H-T-H motif); it reads VREIGEAVGLASSSTVHGHLA. Active-site for autocatalytic cleavage activity residues include serine 129 and lysine 167.

It belongs to the peptidase S24 family. Homodimer.

It catalyses the reaction Hydrolysis of Ala-|-Gly bond in repressor LexA.. Its function is as follows. Represses a number of genes involved in the response to DNA damage (SOS response), including recA and lexA. In the presence of single-stranded DNA, RecA interacts with LexA causing an autocatalytic cleavage which disrupts the DNA-binding part of LexA, leading to derepression of the SOS regulon and eventually DNA repair. This Geobacillus thermodenitrificans (strain NG80-2) protein is LexA repressor.